Here is a 1014-residue protein sequence, read N- to C-terminus: C2 domain-containing protein 5 (1014 aa).

One can recognise a C2 domain in the interval M1–F109. Positions 19, 26, 76, 78, 81, and 84 each coordinate Ca(2+). Disordered regions lie at residues L274–G328, E639–D669, A801–G878, and E992–T1014. Positions N275–Y292 are enriched in polar residues. Residues S293–G318 show a composition bias toward low complexity. Over residues M319 to G328 the composition is skewed to gly residues. The span at S830–S840 shows a compositional bias: polar residues. Over residues A993–A1006 the composition is skewed to low complexity.

Ca(2+) serves as cofactor.

Its subcellular location is the cytoplasmic vesicle membrane. The protein resides in the cytoplasm. It is found in the cell cortex. The protein localises to the cell membrane. It localises to the cell projection. Its subcellular location is the ruffle. Its function is as follows. May be required for insulin-stimulated glucose transport and glucose transporter SLC2A4/GLUT4 translocation from intracellular glucose storage vesicle (GSV) to the plasma membrane (PM) in adipocytes. May bind phospholipid membranes in a calcium-dependent manner. In Xenopus tropicalis (Western clawed frog), this protein is C2 domain-containing protein 5 (c2cd5).